We begin with the raw amino-acid sequence, 436 residues long: MDALYSHFSQVLEQQRKANTRLVVAFSGGVDSRVLLELAHRYAQEHLLPCCAVHVHHGLSHNADQWVQSCAAWCQEKNIPLTVERVQLDLTQGNSIEEEARNARYQALRAHINADDLLLTGQHADDQVETFLLALKRGSGPKGLSSMAQQMPFSQGRLIRPLLDVRRQEIERCAHAIGLHWVEDESNQDTRYDRNFLRQQILPALSERWPSFAASVQRSATLCAEQEALLDELLLPVFEQLFGEDQSLAITLLSQQSELARFKLLRMWLAKLGHPMPTRHQLSLIWQQVALSQADANPILQLSQGQVRRFNQRLYLVADNQDLSAWHAPITLNTPLALPDGLGTIELTVSRGFGQIALPEQSEALWISFNPEGLSAHPAERGHSRKLKKLFQEYQVPSWLRRRTPILMYHQQVVAVAGLFVDRQFIGQDCELFWRK.

27–32 (SGGVDS) contributes to the ATP binding site.

Belongs to the tRNA(Ile)-lysidine synthase family.

Its subcellular location is the cytoplasm. It catalyses the reaction cytidine(34) in tRNA(Ile2) + L-lysine + ATP = lysidine(34) in tRNA(Ile2) + AMP + diphosphate + H(+). Functionally, ligates lysine onto the cytidine present at position 34 of the AUA codon-specific tRNA(Ile) that contains the anticodon CAU, in an ATP-dependent manner. Cytidine is converted to lysidine, thus changing the amino acid specificity of the tRNA from methionine to isoleucine. This Vibrio vulnificus (strain CMCP6) protein is tRNA(Ile)-lysidine synthase.